We begin with the raw amino-acid sequence, 369 residues long: MKSRAAVAFAPGKPLEIVEIDVAPPKKGEVLIKVTHTGVCHTDAFTLSGDDPEGVFPVVLGHEGAGVVVEVGEGVTSVKPGDHVIPLYTAECGECEFCRSGKTNLCVAVRETQGKGLMPDGTTRFSYNGQPLYHYMGCSTFSEYTVVAEVSLAKINPEANHEHVCLLGCGVTTGIGAVHNTAKVQPDDSVAVFGLGAIGLAVVQGARQAKAGRIIAIDTNPKKFDLARRFGATDCINPNDYDKPIKDVLLDINKWGIDHTFECIGNVNVMRAALESAHRGWGQSVIIGVAGSGQEISTRPFQLVTGRVWKGSAFGGVKGRSQLPGMVEDAMKGDIDLEPFVTHTMSLDEINDAFDLMHEGKSIRTVIRY.

Zn(2+) contacts are provided by cysteine 40, histidine 62, cysteine 92, cysteine 95, cysteine 98, cysteine 106, and cysteine 169.

It belongs to the zinc-containing alcohol dehydrogenase family. Class-III subfamily. In terms of assembly, homodimer. The cofactor is Zn(2+).

Its subcellular location is the cytoplasm. It carries out the reaction S-(hydroxymethyl)glutathione + NADP(+) = S-formylglutathione + NADPH + H(+). The enzyme catalyses S-(hydroxymethyl)glutathione + NAD(+) = S-formylglutathione + NADH + H(+). It catalyses the reaction a primary alcohol + NAD(+) = an aldehyde + NADH + H(+). The catalysed reaction is a secondary alcohol + NAD(+) = a ketone + NADH + H(+). It carries out the reaction S-nitrosoglutathione + NADH + H(+) = S-(hydroxysulfenamide)glutathione + NAD(+). Its function is as follows. Has high formaldehyde dehydrogenase activity in the presence of glutathione and catalyzes the oxidation of normal alcohols in a reaction that is not GSH-dependent. In addition, hemithiolacetals other than those formed from GSH, including omega-thiol fatty acids, also are substrates. Also acts as a S-nitroso-glutathione reductase by catalyzing the NADH-dependent reduction of S-nitrosoglutathione. The polypeptide is S-(hydroxymethyl)glutathione dehydrogenase (frmA) (Escherichia coli (strain SMS-3-5 / SECEC)).